The following is a 122-amino-acid chain: Large ribosomal subunit protein uL14 (122 aa).

It belongs to the universal ribosomal protein uL14 family. Part of the 50S ribosomal subunit. Forms a cluster with proteins L3 and L19. In the 70S ribosome, L14 and L19 interact and together make contacts with the 16S rRNA in bridges B5 and B8.

Binds to 23S rRNA. Forms part of two intersubunit bridges in the 70S ribosome. The protein is Large ribosomal subunit protein uL14 of Chlamydia caviae (strain ATCC VR-813 / DSM 19441 / 03DC25 / GPIC) (Chlamydophila caviae).